Reading from the N-terminus, the 486-residue chain is MTLTIYNTLTRRQEPLETVEPGKVKMYCCGVTVYDYCHLGHARSYIVWDTIRRYLIWRGFEVKYIQNFTDIDDKILNRAKEQGSTMAEVSNRFIDAYFADIRRLNVLDADEYPRVTEHIPEIHQLIQILEEKGLAYAVGGDVYYRVERFPSYGKLSGRELEQMQAGASGRVDVEDSEPKKQHPFDFALWKAAKPGEPAWDSPWGQGRPGWHIECSAMIRSKLGATIDIHGGGGDLIFPHHENEIAQSEAAMNQPLARYWTHNGMVMVNGQKMSKSLGNFITIRELLDGVGSWKGDPVNPMAVRLFVLQAHYRKPLDFTEEAIANAENSWKTLKEGLLFGYQYGEKLGWGQESAIIPELATRFQELGDDDFNFSGGLAVLFELAKELRREGNILVHEGTTKTPSDELQRQWNTLVTLGKVLGLEATPDDETLTQPGLSDTDIEALIEQRQAARKNKNFSESDRIRNELQAQGVTLIDSPQGTRWHRS.

Residue Cys-29 coordinates Zn(2+). Positions 31–41 match the 'HIGH' region motif; that stretch reads VTVYDYCHLGH. Cys-214, His-239, and Glu-243 together coordinate Zn(2+). The 'KMSKS' region motif lies at 271–275; sequence KMSKS. Residue Lys-274 coordinates ATP.

The protein belongs to the class-I aminoacyl-tRNA synthetase family. As to quaternary structure, monomer. The cofactor is Zn(2+).

The protein resides in the cytoplasm. It carries out the reaction tRNA(Cys) + L-cysteine + ATP = L-cysteinyl-tRNA(Cys) + AMP + diphosphate. The sequence is that of Cysteine--tRNA ligase from Trichormus variabilis (strain ATCC 29413 / PCC 7937) (Anabaena variabilis).